A 146-amino-acid polypeptide reads, in one-letter code: MKLNELFAGLPKRRRPKVLGRGLGCGKGKTSGRGHKGQKARSGCAVNGFEGGQQPIFTRLPKRGFRSMSRARYEIVNIGALQRLISEKKIVDASNISKELMAELGMIPSPMSKVKILGKGALKAKVGISYDAVSKAAGKKVYLPKG.

A disordered region spans residues 18 to 45 (VLGRGLGCGKGKTSGRGHKGQKARSGCA). Residues 30-39 (TSGRGHKGQK) are compositionally biased toward basic residues.

It belongs to the universal ribosomal protein uL15 family. In terms of assembly, part of the 50S ribosomal subunit.

Binds to the 23S rRNA. In Anaplasma marginale (strain St. Maries), this protein is Large ribosomal subunit protein uL15.